Consider the following 401-residue polypeptide: Phosphoglycerate kinase (401 aa).

Residues 24–26 (DFN), R40, 63–66 (HFGR), R122, and R155 contribute to the substrate site. ATP is bound by residues K206, G297, E328, and 357–360 (GGDS).

This sequence belongs to the phosphoglycerate kinase family. As to quaternary structure, monomer.

The protein localises to the cytoplasm. It catalyses the reaction (2R)-3-phosphoglycerate + ATP = (2R)-3-phospho-glyceroyl phosphate + ADP. It functions in the pathway carbohydrate degradation; glycolysis; pyruvate from D-glyceraldehyde 3-phosphate: step 2/5. The sequence is that of Phosphoglycerate kinase from Synechococcus sp. (strain CC9605).